The following is a 227-amino-acid chain: Agamous-like MADS-box protein AGL17 (227 aa).

An MADS-box domain is found at 3–57 (RGKIVIQKIDDSTSRQVTFSKRRKGLIKKAKELAILCDAEVCLIIFSNTDKLYDF). The K-box domain maps to 86–176 (VKFWQREAET…SRKVQRIHQE (91 aa)).

In terms of tissue distribution, preferentially expressed in roots.

It is found in the nucleus. Its function is as follows. Probable transcription factor. The sequence is that of Agamous-like MADS-box protein AGL17 (AGL17) from Arabidopsis thaliana (Mouse-ear cress).